Here is a 155-residue protein sequence, read N- to C-terminus: Protein-export protein SecB (155 aa).

It belongs to the SecB family. As to quaternary structure, homotetramer, a dimer of dimers. One homotetramer interacts with 1 SecA dimer.

The protein localises to the cytoplasm. In terms of biological role, one of the proteins required for the normal export of preproteins out of the cell cytoplasm. It is a molecular chaperone that binds to a subset of precursor proteins, maintaining them in a translocation-competent state. It also specifically binds to its receptor SecA. The protein is Protein-export protein SecB of Klebsiella pneumoniae subsp. pneumoniae (strain ATCC 700721 / MGH 78578).